A 263-amino-acid polypeptide reads, in one-letter code: MNNLERLRQENPLVVCYTNDVVKNFTANGLLSIGASPAMSEAPEEAKEFYKVAGALLINIGTMTKANEQDILEIGKIANQQGTPIVFDPVAVGASSYRKAFCQKFLSEVKVSVIKGNASEILTLVDATTTMKGTDGKTDLDVVEIAKRAHEELNTAIVLTGKDDVVVQGGKVVKLSNGSPLLAKITGAGCLLGGIVASFLFREENPTLQVLEEAVSIYNIAAEIAEKDQQVNGPGTFLPKLLDQMYNIDFNTYQQQVKRQEVE.

M39 is a binding site for substrate. The ATP site is built by K115 and T160. G187 serves as a coordination point for substrate.

The protein belongs to the Thz kinase family. Mg(2+) is required as a cofactor.

It carries out the reaction 5-(2-hydroxyethyl)-4-methylthiazole + ATP = 4-methyl-5-(2-phosphooxyethyl)-thiazole + ADP + H(+). The protein operates within cofactor biosynthesis; thiamine diphosphate biosynthesis; 4-methyl-5-(2-phosphoethyl)-thiazole from 5-(2-hydroxyethyl)-4-methylthiazole: step 1/1. Functionally, catalyzes the phosphorylation of the hydroxyl group of 4-methyl-5-beta-hydroxyethylthiazole (THZ). In Staphylococcus haemolyticus (strain JCSC1435), this protein is Hydroxyethylthiazole kinase.